The chain runs to 534 residues: Membrane protein insertase YidC (534 aa).

5 helical membrane-spanning segments follow: residues Ile7 to Met27, Ala319 to Phe339, Tyr342 to Trp362, Gly413 to Leu433, and Val493 to Val513.

Belongs to the OXA1/ALB3/YidC family. Type 1 subfamily. In terms of assembly, interacts with the Sec translocase complex via SecD. Specifically interacts with transmembrane segments of nascent integral membrane proteins during membrane integration.

It localises to the cell inner membrane. Required for the insertion and/or proper folding and/or complex formation of integral membrane proteins into the membrane. Involved in integration of membrane proteins that insert both dependently and independently of the Sec translocase complex, as well as at least some lipoproteins. Aids folding of multispanning membrane proteins. The protein is Membrane protein insertase YidC of Nitratidesulfovibrio vulgaris (strain ATCC 29579 / DSM 644 / CCUG 34227 / NCIMB 8303 / VKM B-1760 / Hildenborough) (Desulfovibrio vulgaris).